The following is a 169-amino-acid chain: Der GTPase-activating protein YihI (169 aa).

Disordered stretches follow at residues Met-1 to Glu-98 and Gly-144 to Asn-169. The segment covering Ser-10–Lys-19 has biased composition (basic residues). The segment covering Thr-20–Asp-30 has biased composition (basic and acidic residues). Basic residues predominate over residues Arg-31–His-40. The segment covering Gly-49–Gln-58 has biased composition (polar residues). A compositionally biased stretch (acidic residues) spans Tyr-147–Gln-159. A compositionally biased stretch (basic and acidic residues) spans Glu-160–Asn-169.

This sequence belongs to the YihI family. In terms of assembly, interacts with Der.

In terms of biological role, a GTPase-activating protein (GAP) that modifies Der/EngA GTPase function. May play a role in ribosome biogenesis. The protein is Der GTPase-activating protein YihI of Escherichia coli O139:H28 (strain E24377A / ETEC).